Here is a 397-residue protein sequence, read N- to C-terminus: Cytoplasmic tRNA 2-thiolation protein 2 (397 aa).

This sequence belongs to the CTU2/NCS2 family.

The protein localises to the cytoplasm. It participates in tRNA modification; 5-methoxycarbonylmethyl-2-thiouridine-tRNA biosynthesis. Its function is as follows. Plays a central role in 2-thiolation of mcm(5)S(2)U at tRNA wobble positions of tRNA(Lys), tRNA(Glu) and tRNA(Gln). May act by forming a heterodimer with NCS6/CTU1 that ligates sulfur from thiocarboxylated URM1 onto the uridine of tRNAs at wobble position. In Drosophila grimshawi (Hawaiian fruit fly), this protein is Cytoplasmic tRNA 2-thiolation protein 2.